Here is a 478-residue protein sequence, read N- to C-terminus: Cytochrome c-552 (478 aa).

Positions 1 to 27 (MKKQWTRRSAAAIAMVTTLLLSSHSFA) are cleaved as a signal peptide. Position 91 (His-91) interacts with heme c. Residues Cys-119, Cys-122, and Lys-123 each coordinate heme. Heme c-binding residues include Cys-157, Cys-160, His-161, Cys-206, Cys-209, and His-210. 4 residues coordinate Ca(2+): Glu-212, Tyr-213, Lys-258, and Gln-260. Residue Tyr-213 participates in substrate binding. Residue His-261 coordinates substrate. Heme c contacts are provided by His-272, Cys-279, Cys-282, His-283, His-298, Cys-311, Cys-314, His-315, and His-390.

Belongs to the cytochrome c-552 family. Requires Ca(2+) as cofactor. Heme c is required as a cofactor.

Its subcellular location is the periplasm. It catalyses the reaction 6 Fe(III)-[cytochrome c] + NH4(+) + 2 H2O = 6 Fe(II)-[cytochrome c] + nitrite + 8 H(+). It functions in the pathway nitrogen metabolism; nitrate reduction (assimilation). Functionally, catalyzes the reduction of nitrite to ammonia, consuming six electrons in the process. This chain is Cytochrome c-552, found in Aliivibrio salmonicida (strain LFI1238) (Vibrio salmonicida (strain LFI1238)).